The following is an 850-amino-acid chain: Penicillin-binding protein 1A (850 aa).

Over 1 to 5 (MKFVK) the chain is Cytoplasmic. Residues 6 to 26 (YFLILAVCCILLGAGSIYGLY) traverse the membrane as a helical; Signal-anchor for type II membrane protein segment. The Periplasmic segment spans residues 27-850 (RYIEPQLPDV…IDNGEAQELF (824 aa)). The segment at 48-216 (MQIYSADGEL…STFNPLYSMD (169 aa)) is transglycosylase. E86 functions as the Proton donor; for transglycosylase activity in the catalytic mechanism. The tract at residues 400 to 710 (DVLQTGQQIW…GWRAGRDLQR (311 aa)) is transpeptidase. S465 (acyl-ester intermediate; for transpeptidase activity) is an active-site residue.

In the N-terminal section; belongs to the glycosyltransferase 51 family. It in the C-terminal section; belongs to the transpeptidase family.

The protein localises to the cell inner membrane. The enzyme catalyses [GlcNAc-(1-&gt;4)-Mur2Ac(oyl-L-Ala-gamma-D-Glu-L-Lys-D-Ala-D-Ala)](n)-di-trans,octa-cis-undecaprenyl diphosphate + beta-D-GlcNAc-(1-&gt;4)-Mur2Ac(oyl-L-Ala-gamma-D-Glu-L-Lys-D-Ala-D-Ala)-di-trans,octa-cis-undecaprenyl diphosphate = [GlcNAc-(1-&gt;4)-Mur2Ac(oyl-L-Ala-gamma-D-Glu-L-Lys-D-Ala-D-Ala)](n+1)-di-trans,octa-cis-undecaprenyl diphosphate + di-trans,octa-cis-undecaprenyl diphosphate + H(+). The catalysed reaction is Preferential cleavage: (Ac)2-L-Lys-D-Ala-|-D-Ala. Also transpeptidation of peptidyl-alanyl moieties that are N-acyl substituents of D-alanine.. It functions in the pathway cell wall biogenesis; peptidoglycan biosynthesis. In terms of biological role, cell wall formation. Synthesis of cross-linked peptidoglycan from the lipid intermediates. The enzyme has a penicillin-insensitive transglycosylase N-terminal domain (formation of linear glycan strands) and a penicillin-sensitive transpeptidase C-terminal domain (cross-linking of the peptide subunits). The sequence is that of Penicillin-binding protein 1A (mrcA) from Escherichia coli (strain K12).